Reading from the N-terminus, the 362-residue chain is Chorismate synthase (362 aa).

NADP(+) is bound at residue arginine 46. FMN is bound by residues 122-124 (RSS), 238-239 (NA), glycine 278, 293-297 (KPTPS), and arginine 319.

This sequence belongs to the chorismate synthase family. Homotetramer. It depends on FMNH2 as a cofactor.

It catalyses the reaction 5-O-(1-carboxyvinyl)-3-phosphoshikimate = chorismate + phosphate. Its pathway is metabolic intermediate biosynthesis; chorismate biosynthesis; chorismate from D-erythrose 4-phosphate and phosphoenolpyruvate: step 7/7. Its function is as follows. Catalyzes the anti-1,4-elimination of the C-3 phosphate and the C-6 proR hydrogen from 5-enolpyruvylshikimate-3-phosphate (EPSP) to yield chorismate, which is the branch point compound that serves as the starting substrate for the three terminal pathways of aromatic amino acid biosynthesis. This reaction introduces a second double bond into the aromatic ring system. This chain is Chorismate synthase, found in Campylobacter jejuni subsp. jejuni serotype O:6 (strain 81116 / NCTC 11828).